The following is a 106-amino-acid chain: UPF0473 protein SSU98_0068 (106 aa).

It belongs to the UPF0473 family.

This Streptococcus suis (strain 98HAH33) protein is UPF0473 protein SSU98_0068.